Reading from the N-terminus, the 89-residue chain is NADH-ubiquinone oxidoreductase chain 4L (89 aa).

3 helical membrane-spanning segments follow: residues 1–21 (MNIT…NRKN), 22–42 (IILM…LILV), and 57–77 (IYII…LVAF).

It belongs to the complex I subunit 4L family.

It is found in the mitochondrion membrane. It carries out the reaction a ubiquinone + NADH + 5 H(+)(in) = a ubiquinol + NAD(+) + 4 H(+)(out). Its function is as follows. Core subunit of the mitochondrial membrane respiratory chain NADH dehydrogenase (Complex I) that is believed to belong to the minimal assembly required for catalysis. Complex I functions in the transfer of electrons from NADH to the respiratory chain. The immediate electron acceptor for the enzyme is believed to be ubiquinone. In Neurospora crassa (strain ATCC 24698 / 74-OR23-1A / CBS 708.71 / DSM 1257 / FGSC 987), this protein is NADH-ubiquinone oxidoreductase chain 4L (ndh-4L).